The primary structure comprises 1259 residues: Autism susceptibility gene 2 protein (1259 aa).

Disordered regions lie at residues 1 to 87, 108 to 285, 299 to 470, 771 to 1027, and 1119 to 1146; these read MDGP…EEDI, LKPQ…QDCC, CPQV…PPPP, PNSM…MTVG, and REPHDYSHHHHHHHHPLSVDPRREHERG. Basic residues predominate over residues 8 to 17; it reads HGLRKKRRSR. A compositionally biased stretch (gly residues) spans 28 to 41; it reads GGLGAGAAGGGGAG. The segment covering 108–118 has biased composition (basic and acidic residues); that stretch reads LKPQERVEKRQ. A compositionally biased stretch (basic residues) spans 136–147; sequence HSKKSRLSHPHH. Residues 148–158 are compositionally biased toward basic and acidic residues; the sequence is YSSDRENDRNL. The segment covering 177-192 has biased composition (polar residues); sequence PGQNSCRDSDSESASG. Positions 276–285 are enriched in basic and acidic residues; it reads RSQEKSQDCC. The interval 289-472 is important for regulation of lamellipodia formation; that stretch reads IFEPVVLKDP…PTALPPPPPL (184 aa). 2 stretches are compositionally biased toward pro residues: residues 331 to 345 and 353 to 365; these read PPQPPPLSTQPPQGP and APQPQVQRPPRPQ. Over residues 386–410 the composition is skewed to low complexity; the sequence is SLSQPLSAYNSSSLSLNSLSSSRSS. The segment covering 436–447 has biased composition (polar residues); the sequence is PNHSPLHSFTPT. A compositionally biased stretch (pro residues) spans 801 to 810; the sequence is PSFPTPPPWL. 3 stretches are compositionally biased toward basic and acidic residues: residues 813–850, 876–935, and 960–993; these read GELERSASAAAHDRDRDVDKRDSSVSKDDKERESVEKR, IRAH…EAKQ, and REAEPRKGEPAYENPKKSSEVKVKEERKEDHDLP. Basic residues predominate over residues 1125 to 1134; sequence SHHHHHHHHP. Residues Ser1198 and Ser1233 each carry the phosphoserine modification. The interval 1217–1259 is disordered; the sequence is LSAPPPLISTLGGRPVSPRRTTPLSAEIRERPPSHTLKDIEAR. Basic and acidic residues predominate over residues 1243 to 1259; that stretch reads EIRERPPSHTLKDIEAR.

Belongs to the AUTS2 family. In terms of assembly, component of a PRC1-like complex that contains PCGF5, RNF2, CSNK2B, RYBP and AUTS2. Within this complex, interacts directly with PCGF5 and CSNK2B. Interacts with the histone acetyltransferase EP300/p300. Interacts (via Pro-rich region) with PREX1, DOCK1 and ELMO2. In terms of tissue distribution, strongly expressed in brain, skeletal muscle and kidney. Also expressed in placenta, lung and leukocytes.

It localises to the nucleus. The protein localises to the cytoplasm. Its subcellular location is the cytoskeleton. It is found in the cell projection. The protein resides in the growth cone. Functionally, component of a Polycomb group (PcG) multiprotein PRC1-like complex, a complex class required to maintain the transcriptionally repressive state of many genes, including Hox genes, throughout development. PcG PRC1 complex acts via chromatin remodeling and modification of histones; it mediates monoubiquitination of histone H2A 'Lys-119', rendering chromatin heritably changed in its expressibility. The PRC1-like complex that contains PCGF5, RNF2, CSNK2B, RYBP and AUTS2 has decreased histone H2A ubiquitination activity, due to the phosphorylation of RNF2 by CSNK2B. As a consequence, the complex mediates transcriptional activation. In the cytoplasm, plays a role in axon and dendrite elongation and in neuronal migration during embryonic brain development. Promotes reorganization of the actin cytoskeleton, lamellipodia formation and neurite elongation via its interaction with RAC guanine nucleotide exchange factors, which then leads to the activation of RAC1. The protein is Autism susceptibility gene 2 protein (AUTS2) of Homo sapiens (Human).